Reading from the N-terminus, the 319-residue chain is Oligopeptide transport ATP-binding protein OppF (319 aa).

Positions 5–255 constitute an ABC transporter domain; the sequence is LNLKDLKVYY…PQHIYTKRLL (251 aa). 48-55 is an ATP binding site; it reads GESGSGKS.

It belongs to the ABC transporter superfamily. The complex is composed of two ATP-binding proteins (OppD and OppF), two transmembrane proteins (OppB and OppC) and a solute-binding protein (OppA).

The protein localises to the cell membrane. The enzyme catalyses a [peptide](out) + ATP + H2O = a [peptide](in) + ADP + phosphate + H(+). In terms of biological role, part of the ABC transporter complex OppABCDF involved in the uptake of oligopeptides. Probably responsible for energy coupling to the transport system. Essential for uptake of peptides larger than three amino acids and for growth in milk. This chain is Oligopeptide transport ATP-binding protein OppF (oppF), found in Lactococcus lactis subsp. lactis (strain IL1403) (Streptococcus lactis).